The primary structure comprises 422 residues: Phytoene synthase, chloroplastic (422 aa).

The N-terminal 83 residues, 1–83 (MSLASSLVVS…GSVIVASMVA (83 aa)), are a transit peptide targeting the chloroplast.

It belongs to the phytoene/squalene synthase family. In terms of assembly, monomer.

It is found in the plastid. It localises to the chloroplast. The catalysed reaction is 2 (2E,6E,10E)-geranylgeranyl diphosphate = 15-cis-phytoene + 2 diphosphate. It functions in the pathway carotenoid biosynthesis; phytoene biosynthesis; all-trans-phytoene from geranylgeranyl diphosphate: step 1/1. Catalyzes the reaction from prephytoene diphosphate to phytoene. The polypeptide is Phytoene synthase, chloroplastic (PSY) (Cucumis melo (Muskmelon)).